The following is a 1474-amino-acid chain: Alpha-2-macroglobulin (1474 aa).

An N-terminal signal peptide occupies residues 1–23 (MGKNKLLHPSLVLLLLVLLPTDA). Cysteines 48 and 86 form a disulfide. N-linked (GlcNAc...) asparagine glycosylation is found at N55, N70, and N247. Intrachain disulfides connect C251–C299 and C269–C287. N-linked (GlcNAc...) asparagine glycosylation is found at N396 and N410. Disulfide bonds link C470/C563, C595/C771, C642/C689, C821/C849, C847/C883, C921/C1321, C1079/C1127, and C1352/C1467. A bait region region spans residues 690–728 (PQLQQYEMHGPEGLRVGFYESDVMGRGHARLVHAEEPPT). Isoglutamyl lysine isopeptide (Gln-Lys) (interchain with K-? in other proteins) cross-links involve residues Q693 and Q694. Inhibitory stretches follow at residues 704 to 709 (RVGFYE), 719 to 723 (RLVHA), and 730 to 735 (TVRKYF). N-linked (GlcNAc...) asparagine glycosylation is present at N869. Positions 972 to 975 (CGEQ) form a cross-link, isoglutamyl cysteine thioester (Cys-Gln). N991 is a glycosylation site (N-linked (GlcNAc...) asparagine). A glycan (N-linked (GlcNAc...) asparagine) is linked at N1424.

This sequence belongs to the protease inhibitor I39 (alpha-2-macroglobulin) family. As to quaternary structure, homotetramer; disulfide-linked. Plasma.

The protein localises to the secreted. Functionally, is able to inhibit all four classes of proteinases by a unique 'trapping' mechanism. This protein has a peptide stretch, called the 'bait region' which contains specific cleavage sites for different proteinases. When a proteinase cleaves the bait region, a conformational change is induced in the protein which traps the proteinase. The entrapped enzyme remains active against low molecular weight substrates (activity against high molecular weight substrates is greatly reduced). Following cleavage in the bait region a thioester bond is hydrolyzed and mediates the covalent binding of the protein to the proteinase. In Pongo abelii (Sumatran orangutan), this protein is Alpha-2-macroglobulin (A2M).